A 188-amino-acid polypeptide reads, in one-letter code: Small ribosomal subunit protein uS7 (188 aa).

Belongs to the universal ribosomal protein uS7 family. Part of the 30S ribosomal subunit.

One of the primary rRNA binding proteins, it binds directly to 16S rRNA where it nucleates assembly of the head domain of the 30S subunit. Is located at the subunit interface close to the decoding center. This chain is Small ribosomal subunit protein uS7, found in Methanococcus maripaludis (strain C6 / ATCC BAA-1332).